The chain runs to 860 residues: Leucine--tRNA ligase (860 aa).

The 'HIGH' region motif lies at 42-52 (PYPSGRLHMGH). The short motif at 619–623 (KMSKS) is the 'KMSKS' region element. An ATP-binding site is contributed by K622.

This sequence belongs to the class-I aminoacyl-tRNA synthetase family.

The protein localises to the cytoplasm. The catalysed reaction is tRNA(Leu) + L-leucine + ATP = L-leucyl-tRNA(Leu) + AMP + diphosphate. The polypeptide is Leucine--tRNA ligase (Cronobacter sakazakii (strain ATCC BAA-894) (Enterobacter sakazakii)).